Here is a 632-residue protein sequence, read N- to C-terminus: Biosynthetic arginine decarboxylase (632 aa).

At Lys-101 the chain carries N6-(pyridoxal phosphate)lysine. Substrate is bound at residue 281 to 291; sequence FDVGGGLGVDY.

It belongs to the Orn/Lys/Arg decarboxylase class-II family. SpeA subfamily. The cofactor is Mg(2+). Requires pyridoxal 5'-phosphate as cofactor.

It carries out the reaction L-arginine + H(+) = agmatine + CO2. The protein operates within amine and polyamine biosynthesis; agmatine biosynthesis; agmatine from L-arginine: step 1/1. In terms of biological role, catalyzes the biosynthesis of agmatine from arginine. The polypeptide is Biosynthetic arginine decarboxylase (Klebsiella pneumoniae (strain 342)).